Consider the following 3018-residue polypeptide: Genome polyprotein (3018 aa).

Position 2 is an N-acetylserine; by host (serine 2). Positions 2-23 are interaction with STAT1; sequence STLPKPQRKTKRNTNRRPMDVK. Residues 2–58 form an interaction with EIF2AK2/PKR region; it reads STLPKPQRKTKRNTNRRPMDVKFPGGGQIVGGVYLLPRKGPRLGVRATRKTSERSQP. Positions 2–59 are interaction with DDX3X; that stretch reads STLPKPQRKTKRNTNRRPMDVKFPGGGQIVGGVYLLPRKGPRLGVRATRKTSERSQPR. The disordered stretch occupies residues 2–75; it reads STLPKPQRKT…PKARQPQGRH (74 aa). Over 2–168 the chain is Cytoplasmic; that stretch reads STLPKPQRKT…EDGINYATGN (167 aa). 2 short sequence motifs (nuclear localization signal) span residues 5-13 and 38-43; these read PKPQRKTKR and PRKGPR. Basic residues predominate over residues 7-16; the sequence is PQRKTKRNTN. Phosphoserine; by host is present on serine 53. 2 consecutive short sequence motifs (nuclear localization signal) follow at residues 58 to 64 and 66 to 71; these read PRGRRQP and PKARQP. Serine 99 and serine 116 each carry phosphoserine; by host. The important for endoplasmic reticulum and mitochondrial localization stretch occupies residues 112–152; that stretch reads PRRRSRNLGKVIDTLTCGFADLMWYIPVVGAPLGGVAAALA. The tract at residues 122–173 is interaction with APOA2; that stretch reads VIDTLTCGFADLMWYIPVVGAPLGGVAAALAHGVRAIEDGINYATGNLPGCS. An important for lipid droplets localization region spans residues 164-167; that stretch reads YATG. A helical membrane pass occupies residues 169–189; it reads LPGCSFSIFLLALLSCLTTPA. A propeptide spans 178–191 (ER anchor for the core protein, removed in mature form by host signal peptidase); that stretch reads LLALLSCLTTPASA. The Lumenal portion of the chain corresponds to 190–358; it reads SALTYGNSSG…FGGHWGILLA (169 aa). 4 N-linked (GlcNAc...) asparagine; by host glycosylation sites follow: asparagine 196, asparagine 209, asparagine 234, and asparagine 250. The segment at 265 to 296 is important for fusion; it reads LAGAAVVCSSLYIGDLCGSLFLAGQLFAFQPR. Asparagine 305 carries an N-linked (GlcNAc...) asparagine; by host glycan. The helical transmembrane segment at 359-379 threads the bilayer; sequence VAYFGMAGNWLKVLAVLFLFA. Topologically, residues 380–729 are lumenal; it reads GVEAQTMIAH…WEYIVLMFLV (350 aa). Residues 385–411 are HVR1; the sequence is TMIAHGVSQTTSGFASLLTPGAKQNIQ. Asparagine 416, asparagine 422, and asparagine 429 each carry an N-linked (GlcNAc...) (high mannose) asparagine; by host glycan. Cystine bridges form between cysteine 428–cysteine 552, cysteine 451–cysteine 458, cysteine 486–cysteine 494, and cysteine 503–cysteine 508. A glycan (N-linked (GlcNAc...) asparagine; by host) is linked at asparagine 447. The tract at residues 474–478 is HVR2; sequence KNVSG. Asparagine 475 carries N-linked (GlcNAc...) asparagine; by host glycosylation. The CD81-binding 1 stretch occupies residues 480–493; the sequence is SDDRPYCWHYAPRP. Asparagine 532 carries an N-linked (GlcNAc...) asparagine; by host glycan. Residues 544–551 are CD81-binding 2; it reads PPTGGWFG. Asparagine 556 carries N-linked (GlcNAc...) asparagine; by host glycosylation. Cysteine 564 and cysteine 569 are disulfide-bonded. Asparagine 577 is a glycosylation site (N-linked (GlcNAc...) asparagine; by host). 3 disulfides stabilise this stretch: cysteine 585–cysteine 589, cysteine 601–cysteine 624, and cysteine 611–cysteine 648. Asparagine 627 and asparagine 649 each carry an N-linked (GlcNAc...) (high mannose) asparagine; by host glycan. Cysteines 656 and 681 form a disulfide. Positions 664–675 are PKR/eIF2-alpha phosphorylation homology domain (PePHD); it reads IEMSPLLFSTTQ. A helical transmembrane segment spans residues 730 to 750; the sequence is LADARICTCLWLMLLISTVEA. Residues 751–761 are Lumenal-facing; it reads AVERLVVLNAA. The helical transmembrane segment at 762–782 threads the bilayer; that stretch reads SAAGTAGWWWAVLFLCCVWYV. The Cytoplasmic portion of the chain corresponds to 783–786; sequence KGRL. Residues 787–807 traverse the membrane as a helical segment; the sequence is VPACTYMALGMWPLLLTILAL. Residues 808-817 lie on the Lumenal side of the membrane; the sequence is PPRAYAMDNE. The helical transmembrane segment at 818 to 838 threads the bilayer; it reads QAASLGAVGLLVITIFSITPM. The Cytoplasmic portion of the chain corresponds to 839-885; it reads YKKLLNCFIWWNQYFLARAEAMVHEWVPDLRVRGGRDSIILLTCLLH. A helical transmembrane segment spans residues 886 to 906; that stretch reads PQLGFEVTKILLAVLAPLYIL. Residues 907–932 lie on the Lumenal side of the membrane; that stretch reads QYSLLKVPYFVRAHILLRACLLVRRL. A Peptidase C18 domain is found at 907-1030; it reads QYSLLKVPYF…DMQRGGWKLL (124 aa). The tract at residues 908-1210 is protease NS2-3; sequence YSLLKVPYFV…PVENMETTMR (303 aa). Cysteine 926 is lipidated: S-palmitoyl cysteine; by host. Residues 933 to 953 traverse the membrane as a helical segment; sequence AGGKYVQACLLRLGAWTGTFV. The segment at 933–953 is interaction with host SCPS1; the sequence is AGGKYVQACLLRLGAWTGTFV. The Cytoplasmic segment spans residues 954–1661; it reads YDHLAPLSDW…CMSADLEVIT (708 aa). Residues histidine 956, glutamate 976, and cysteine 997 each act as for protease NS2 activity; shared with dimeric partner in the active site. The Peptidase S29 domain maps to 1031-1212; the sequence is APITAYAQQT…ENMETTMRSP (182 aa). Catalysis depends on charge relay system; for serine protease NS3 activity residues histidine 1087 and aspartate 1111. Residues cysteine 1127 and cysteine 1129 each coordinate Zn(2+). The active-site Charge relay system; for serine protease NS3 activity is the serine 1169. 2 residues coordinate Zn(2+): cysteine 1175 and histidine 1179. 1234–1241 contacts ATP; sequence APTGSGKS. Mg(2+) is bound by residues serine 1241 and glutamate 1321. The short motif at 1320–1323 is the DECH box element; the sequence is DECH. The segment at 1490–1502 is RNA-binding; that stretch reads QRRGRTGRGKPGV. A helical transmembrane segment spans residues 1662–1682; it reads STWVLVGGVLAALAAYCLSVG. Positions 1683–1694 are NS3-binding; the sequence is CVVICGRITLTG. Residues 1683–1809 are Cytoplasmic-facing; sequence CVVICGRITL…SLTSPLRTSQ (127 aa). Residues 1810–1830 traverse the membrane as a helical segment; it reads TLLLNILGGWIAAQVAPPPAS. Over 1831-1832 the chain is Lumenal; the sequence is TA. A helical transmembrane segment spans residues 1833 to 1853; it reads FVVSGLAGAAVGSIRLGRVLV. A topological domain (cytoplasmic) is located at residue aspartate 1854. Residues 1855–1875 traverse the membrane as a helical segment; that stretch reads VLAGYGAGVSGALVAFKIMSG. Topologically, residues 1876-1885 are lumenal; that stretch reads ECPSTEDMVN. Residues 1886-1906 form a helical membrane-spanning segment; sequence LLPALLSPGVALVGVVCAAIL. Over 1907–1976 the chain is Cytoplasmic; sequence RRHVGPAEGA…WVNEDTATPC (70 aa). The S-palmitoyl cysteine; by host moiety is linked to residue cysteine 1976. An intramembrane segment occupies 1977-2006; that stretch reads ATSWLRDVWDWVCTVLSDFKVWLQAKLFPR. Over 2007-2997 the chain is Cytoplasmic; sequence LPGIPFLSCQ…YHSVSQARPR (991 aa). Residues cysteine 2015, cysteine 2033, cysteine 2035, and cysteine 2056 each contribute to the Zn(2+) site. An FKBP8-binding region spans residues 2124–2212; that stretch reads EFFTEVDGVR…ASSSANQLSA (89 aa). Residues 2124 to 2337 form a transcriptional activation region; it reads EFFTEVDGVR…PVPPPRRKRL (214 aa). The tract at residues 2139–2143 is interaction with non-structural protein 4A; sequence PPCKP. Residues 2192–2215 form a disordered region; the sequence is RRLKKGSPPSLASSSANQLSAPSL. The interaction with host SKP2 stretch occupies residues 2193-2445; it reads RLKKGSPPSL…ALITPCAAEE (253 aa). 5 positions are modified to phosphoserine; by host: serine 2198, serine 2201, serine 2205, serine 2211, and serine 2214. Residues 2198–2215 are compositionally biased toward low complexity; it reads SPPSLASSSANQLSAPSL. The segment at 2214–2253 is ISDR; sequence SLRATCTTSQKHPEMELLQANLLWKHEMGSHIPRVQSENK. Residues 2214–2279 are interaction with EIF2AK2/PKR; it reads SLRATCTTSQ…REISVSVECH (66 aa). Residues 2253-2311 form an NS4B-binding region; the sequence is KVVVLDSFELYPLEYEEREISVSVECHRQPRCKFPPVFPVWARPDNNPPFIQAWQMPGY. The tract at residues 2304–2382 is V3; it reads QAWQMPGYEP…SITSPVPPDP (79 aa). Residues 2327 to 2330 carry the SH3-binding motif; sequence APVP. The short motif at 2332 to 2340 is the Nuclear localization signal element; that stretch reads PRRKRLVHL. Lysine 2355 is covalently cross-linked (Glycyl lysine isopeptide (Lys-Gly) (interchain with G-Cter in ubiquitin)). The segment at 2359 to 2417 is disordered; that stretch reads ESSNDPGPSSDSGLSITSPVPPDPTTPEDAGSEAESYSSMPPLEGEPGDPDLSSGSWST. Residues 2360-2373 are compositionally biased toward low complexity; the sequence is SSNDPGPSSDSGLS. Phosphoserine; by host is present on residues serine 2456 and serine 2469. Residues 2641-2759 form the RdRp catalytic domain; it reads PMGFSYDTRC…ICESAGVQED (119 aa). Mg(2+) is bound by residues aspartate 2647, aspartate 2745, and aspartate 2746. Residues 2998–3018 traverse the membrane as a helical segment; sequence FLLLGLLLLTVGVGIFLLPAR.

Belongs to the hepacivirus polyprotein family. As to quaternary structure, homooligomer. Interacts with E1 (via C-terminus). Interacts with the non-structural protein 5A. Interacts (via N-terminus) with host STAT1 (via SH2 domain); this interaction results in decreased STAT1 phosphorylation and ubiquitin-mediated proteasome-dependent STAT1 degradation, leading to decreased IFN-stimulated gene transcription. Interacts with host STAT3; this interaction constitutively activates STAT3. Interacts with host LTBR receptor. Interacts with host TNFRSF1A receptor and possibly induces apoptosis. Interacts with host HNRPK. Interacts with host YWHAE. Interacts with host UBE3A/E6AP. Interacts with host DDX3X. Interacts with host APOA2. Interacts with host RXRA protein. Interacts with host SP110 isoform 3/Sp110b; this interaction sequesters the transcriptional corepressor SP110 away from the nucleus. Interacts with host CREB3 nuclear transcription protein; this interaction triggers cell transformation. Interacts with host ACY3. Interacts with host C1QR1. Interacts with host RBM24; this interaction, which enhances the interaction of the mature core protein with 5'-UTR, may inhibit viral translation and favor replication. Interacts with host EIF2AK2/PKR; this interaction induces the autophosphorylation of EIF2AK2. Part of the viral assembly initiation complex composed of NS2, E1, E2, NS3, NS4A, NS5A and the mature core protein. Forms a heterodimer with envelope glycoprotein E2. Interacts with mature core protein. Interacts with protease NS2. The heterodimer E1/E2 interacts with host CLDN1; this interaction plays a role in viral entry into host cell. Interacts with host SPSB2 (via C-terminus). Part of the viral assembly initiation complex composed of NS2, E1, E2, NS3, NS4A, NS5A and the mature core protein. Interacts with host NEURL3; this interaction prevents E1 binding to glycoprotein E2. In terms of assembly, forms a heterodimer with envelope glycoprotein E1. Interacts with host CD81 and SCARB1 receptors; these interactions play a role in viral entry into host cell. Interacts with host EIF2AK2/PKR; this interaction inhibits EIF2AK2 and probably allows the virus to evade the innate immune response. Interacts with host CD209/DC-SIGN and CLEC4M/DC-SIGNR. Interact with host SPCS1; this interaction is essential for viral particle assembly. Interacts with protease NS2. The heterodimer E1/E2 interacts with host CLDN1; this interaction plays a role in viral entry into host cell. Part of the viral assembly initiation complex composed of NS2, E1, E2, NS3, NS4A, NS5A and the mature core protein. Interacts with host SLC3A2/4F2hc; the interaction may facilitate viral entry into host cell. Interacts with human PLSCR1. As to quaternary structure, homohexamer. Homoheptamer. Interacts with protease NS2. Homodimer. Interacts with host SPCS1; this interaction is essential for viral particle assembly. Interacts with envelope glycoprotein E1. Interacts with envelope glycoprotein E2. Interacts with viroporin p7. Interacts with serine protease/helicase NS3. Part of the replication complex composed of NS2, NS3, NS4A, NS4B, NS5A and the RNA-directed RNA polymerase embedded in an ER-derived membranous web. Part of the viral assembly initiation complex composed of NS2, E1, E2, NS3, NS4A, NS5A and the mature core protein. In terms of assembly, interacts with protease NS2. Interacts with non-structural protein 4A; this interaction stabilizes the folding of NS3 serine protease. NS3-NS4A interaction is essential for NS3 activation and allows membrane anchorage of the latter. NS3/NS4A complex also prevents phosphorylation of host IRF3, thus preventing the establishment of dsRNA induced antiviral state. Interacts with host MAVS; this interaction leads to the cleavage and inhibition of host MAVS. Interacts with host TICAM1; this interaction leads to the cleavage and inhibition of host TICAM1. Interacts with host TANK-binding kinase/TBK1; this interaction results in the inhibition of the association between TBK1 and IRF3, which leads to the inhibition of IRF3 activation. Interacts with host RBM24. Part of the replication complex composed of NS2, NS3, NS4A, NS4B, NS5A and the RNA-directed RNA polymerase embedded in an ER-derived membranous web. Part of the viral assembly initiation complex composed of NS2, E1, E2, NS3, NS4A, NS5A and the mature core protein. As to quaternary structure, interacts with NS3 serine protease; this interaction stabilizes the folding of NS3 serine protease. NS3-NS4A interaction is essential for NS3 activation and allows membrane anchorage of the latter. Interacts with non-structural protein 5A (via N-terminus). Part of the replication complex composed of NS2, NS3, NS4A, NS4B, NS5A and the RNA-directed RNA polymerase embedded in an ER-derived membranous web. Part of the viral assembly initiation complex composed of NS2, E1, E2, NS3, NS4A, NS5A and the mature core protein. Homomultimer. Interacts with non-structural protein NS5A. Interacts with host PLA2G4C; this interaction likely initiates the recruitment of replication complexes to lipid droplets. Interacts with host STING; this interaction disrupts the interaction between STING and TBK1 thereby suppressing the interferon signaling. Part of the replication complex composed of NS2, NS3, NS4A, NS4B, NS5A and the RNA-directed RNA polymerase embedded in an ER-derived membranous web. In terms of assembly, monomer. Homodimer; dimerization is required for RNA-binding. Interacts with the mature core protein. Interacts (via N-terminus) with non-structural protein 4A. Interacts with non-structural protein 4B. Interacts (via region D2) with RNA-directed RNA polymerase. Part of the viral assembly initiation complex composed of NS2, E1, E2, NS3, NS4A, NS5A and the mature core protein. Part of the replication complex composed of NS2, NS3, NS4A, NS4B, NS5A and the RNA-directed RNA polymerase embedded in an ER-derived membranous web. Interacts with host GRB2. Interacts with host BIN1. Interacts with host PIK3R1. Interacts with host SRCAP. Interacts with host FKBP8. Interacts (via C-terminus) with host VAPB (via MSP domain). Interacts with host EIF2AK2/PKR; this interaction leads to disruption of EIF2AK2 dimerization by NS5A and probably allows the virus to evade the innate immune response. Interacts (via N-terminus) with host PACSIN2 (via N-terminus); this interaction attenuates protein kinase C alpha-mediated phosphorylation of PACSIN2 by disrupting the interaction between PACSIN2 and PRKCA. Interacts (via N-terminus) with host SRC kinase (via SH2 domain). Interacts with most Src-family kinases. Interacts with host IFI27 and SKP2; promotes the ubiquitin-mediated proteasomal degradation of NS5A. Interacts with host GPS2. Interacts with host TNFRSF21; this interaction allows the modulation by the virus of JNK, p38 MAPK, STAT3, and Akt signaling pathways in a DR6-dependent manner. Interacts (via N-terminus) with host CIDEB (via N-terminus); this interaction seems to regulate the association of HCV particles with APOE. Interacts with host CHKA/Choline Kinase-alpha; CHKA bridges host PI4KA and NS5A and potentiates NS5A-stimulated PI4KA activity, which then facilitates the targeting of the ternary complex to the ER for viral replication. Interacts with host SPSB2 (via C-terminus); this interaction targets NS5A for ubiquitination and degradation. Interacts with host RAB18; this interaction may promote the association of NS5A and other replicase components with lipid droplets. Interacts (via region D2) with host PPIA/CYPA; the interaction stimulates RNA-binding ability of NS5A and is dependent on the peptidyl-prolyl cis-trans isomerase activity of PPIA/CYPA. Interacts with host TRIM14; this interaction induces the degradation of NS5A. As to quaternary structure, homooligomer. Interacts with non-structural protein 5A. Interacts with host VAPB. Interacts with host PRK2/PKN2. Interacts with host HNRNPA1 and SEPT6; these interactions facilitate viral replication. Part of the replication complex composed of NS2, NS3, NS4A, NS4B, NS5A and the RNA-directed RNA polymerase. Zn(2+) serves as cofactor. It depends on Mg(2+) as a cofactor. Post-translationally, specific enzymatic cleavages in vivo yield mature proteins. The structural proteins, core, E1, E2 and p7 are produced by proteolytic processing by host signal peptidases. The core protein precursor is synthesized as a 23 kDa, which is retained in the ER membrane through the hydrophobic signal peptide. Cleavage by the signal peptidase releases the 21 kDa mature core protein. The cleavage of the core protein precursor occurs between aminoacids 176 and 188 but the exact cleavage site is not known. Some degraded forms of the core protein appear as well during the course of infection. The other proteins (p7, NS2, NS3, NS4A, NS4B, NS5A and NS5B) are cleaved by the viral proteases. Autoprocessing between NS2 and NS3 is mediated by the NS2 cysteine protease catalytic domain and regulated by the NS3 N-terminal domain. In terms of processing, phosphorylated by host PKC and PKA. Ubiquitinated; mediated by UBE3A and leading to core protein subsequent proteasomal degradation. Post-translationally, highly N-glycosylated. In terms of processing, palmitoylation is required for NS2/3 autoprocessing and E2 recruitment to membranes. Palmitoylated. This modification may play a role in its polymerization or in protein-protein interactions. Post-translationally, phosphorylated on serines in a basal form termed p56. p58 is a hyperphosphorylated form of p56. p56 and p58 coexist in the cell in roughly equivalent amounts. Hyperphosphorylation is dependent on the presence of NS4A. Host CSNK1A1/CKI-alpha or RPS6KB1 kinases may be responsible for NS5A phosphorylation. In terms of processing, tyrosine phosphorylation is essential for the interaction with host SRC. The N-terminus is phosphorylated by host PRK2/PKN2.

It localises to the host endoplasmic reticulum membrane. It is found in the host mitochondrion membrane. The protein resides in the virion. Its subcellular location is the host cytoplasm. The protein localises to the host nucleus. It localises to the host lipid droplet. It is found in the virion membrane. The protein resides in the host mitochondrion. Its subcellular location is the host cell membrane. The protein localises to the host perinuclear region. The enzyme catalyses Hydrolysis of four peptide bonds in the viral precursor polyprotein, commonly with Asp or Glu in the P6 position, Cys or Thr in P1 and Ser or Ala in P1'.. It carries out the reaction a ribonucleoside 5'-triphosphate + H2O = a ribonucleoside 5'-diphosphate + phosphate + H(+). The catalysed reaction is ATP + H2O = ADP + phosphate + H(+). It catalyses the reaction RNA(n) + a ribonucleoside 5'-triphosphate = RNA(n+1) + diphosphate. Inhibited by the antiviral drug hexamethylene amiloride. Inhibition by amantadine appears to be genotype-dependent. Also inhibited by long-alkyl-chain iminosugar derivatives. Its activity is regulated as follows. Activity is up-regulated by PRK2/PKN2-mediated phosphorylation. In terms of biological role, packages viral RNA to form a viral nucleocapsid, and promotes virion budding. Participates in the viral particle production as a result of its interaction with the non-structural protein 5A. Binds RNA and may function as a RNA chaperone to induce the RNA structural rearrangements taking place during virus replication. Modulates viral translation initiation by interacting with viral IRES and 40S ribosomal subunit. Affects various cell signaling pathways, host immunity and lipid metabolism. Prevents the establishment of cellular antiviral state by blocking the interferon-alpha/beta (IFN-alpha/beta) and IFN-gamma signaling pathways and by blocking the formation of phosphorylated STAT1 and promoting ubiquitin-mediated proteasome-dependent degradation of STAT1. Activates STAT3 leading to cellular transformation. Regulates the activity of cellular genes, including c-myc and c-fos. May repress the promoter of p53, and sequester CREB3 and SP110 isoform 3/Sp110b in the cytoplasm. Represses cell cycle negative regulating factor CDKN1A, thereby interrupting an important check point of normal cell cycle regulation. Targets transcription factors involved in the regulation of inflammatory responses and in the immune response: suppresses TNF-induced NF-kappa-B activation, and activates AP-1. Binds to dendritic cells (DCs) via C1QR1, resulting in down-regulation of T-lymphocytes proliferation. Alters lipid metabolism by interacting with hepatocellular proteins involved in lipid accumulation and storage. Induces up-regulation of FAS promoter activity, and thereby contributes to the increased triglyceride accumulation in hepatocytes (steatosis). Forms a heterodimer with envelope glycoprotein E2, which mediates virus attachment to the host cell, virion internalization through clathrin-dependent endocytosis and fusion with host membrane. Fusion with the host cell is most likely mediated by both E1 and E2, through conformational rearrangements of the heterodimer required for fusion rather than a classical class II fusion mechanism. E1/E2 heterodimer binds host apolipoproteins such as APOB and ApoE thereby forming a lipo-viro-particle (LVP). APOE associated to the LVP allows the initial virus attachment to cell surface receptors such as the heparan sulfate proteoglycans (HSPGs), syndecan-1 (SDC1), syndecan-1 (SDC2), the low-density lipoprotein receptor (LDLR) and scavenger receptor class B type I (SCARB1). The cholesterol transfer activity of SCARB1 allows E2 exposure and binding of E2 to SCARB1 and the tetraspanin CD81. E1/E2 heterodimer binding on CD81 activates the epithelial growth factor receptor (EGFR) signaling pathway. Diffusion of the complex E1-E2-EGFR-SCARB1-CD81 to the cell lateral membrane allows further interaction with Claudin 1 (CLDN1) and occludin (OCLN) to finally trigger HCV entry. Its function is as follows. Forms a heterodimer with envelope glycoprotein E1, which mediates virus attachment to the host cell, virion internalization through clathrin-dependent endocytosis and fusion with host membrane. Fusion with the host cell is most likely mediated by both E1 and E2, through conformational rearrangements of the heterodimer required for fusion rather than a classical class II fusion mechanism. The interaction between envelope glycoprotein E2 and host apolipoprotein E/APOE allows the proper assembly, maturation and infectivity of the viral particles. This interaction is probably promoted via the up-regulation of cellular autophagy by the virus. E1/E2 heterodimer binds host apolipoproteins such as APOB and APOE thereby forming a lipo-viro-particle (LVP). APOE associated to the LVP allows the initial virus attachment to cell surface receptors such as the heparan sulfate proteoglycans (HSPGs), syndecan-1 (SDC1), syndecan-1 (SDC2), the low-density lipoprotein receptor (LDLR) and scavenger receptor class B type I (SCARB1). The cholesterol transfer activity of SCARB1 allows E2 exposure and binding of E2 to SCARB1 and the tetraspanin CD81. E1/E2 heterodimer binding on CD81 activates the epithelial growth factor receptor (EGFR) signaling pathway. Diffusion of the complex E1-E2-EGFR-SCARB1-CD81 to the cell lateral membrane allows further interaction with Claudin 1 (CLDN1) and occludin (OCLN) to finally trigger HCV entry. Inhibits host EIF2AK2/PKR activation, preventing the establishment of an antiviral state. Viral ligand for CD209/DC-SIGN and CLEC4M/DC-SIGNR, which are respectively found on dendritic cells (DCs), and on liver sinusoidal endothelial cells and macrophage-like cells of lymph node sinuses. These interactions allow the capture of circulating HCV particles by these cells and subsequent facilitated transmission to permissive cells such as hepatocytes and lymphocyte subpopulations. The interaction between E2 and host amino acid transporter complex formed by SLC3A2 and SLC7A5/LAT1 may facilitate viral entry into host cell. Functionally, ion channel protein that acts as a viroporin and plays an essential role in the assembly, envelopment and secretion of viral particles. Regulates the host cell secretory pathway, which induces the intracellular retention of viral glycoproteins and favors assembly of viral particles. Creates a pore in acidic organelles and releases Ca(2+) and H(+) in the cytoplasm of infected cells, leading to a productive viral infection. High levels of cytoplasmic Ca(2+) may trigger membrane trafficking and transport of viral ER-associated proteins to viroplasms, sites of viral genome replication. This ionic imbalance induces the assembly of the inflammasome complex, which triggers the maturation of pro-IL-1beta into IL-1beta through the action of caspase-1. Targets also host mitochondria and induces mitochondrial depolarization. In addition of its role as a viroporin, acts as a lipid raft adhesion factor. In terms of biological role, cysteine protease required for the proteolytic auto-cleavage between the non-structural proteins NS2 and NS3. The N-terminus of NS3 is required for the function of NS2 protease (active region NS2-3). Promotes the initiation of viral particle assembly by mediating the interaction between structural and non-structural proteins. Displays three enzymatic activities: serine protease with a chymotrypsin-like fold, NTPase and RNA helicase. NS3 serine protease, in association with NS4A, is responsible for the cleavages of NS3-NS4A, NS4A-NS4B, NS4B-NS5A and NS5A-NS5B. The NS3/NS4A complex prevents phosphorylation of host IRF3, thus preventing the establishment of dsRNA induced antiviral state. The NS3/NS4A complex induces host amino acid transporter component SLC3A2, thus contributing to HCV propagation. NS3 RNA helicase binds to RNA and unwinds both dsDNA and dsRNA in the 3' to 5' direction, and likely resolves RNA complicated stable secondary structures in the template strand. Binds a single ATP and catalyzes the unzipping of a single base pair of dsRNA. Inhibits host antiviral proteins TBK1 and IRF3 thereby preventing the establishment of an antiviral state. Cleaves host MAVS/CARDIF thereby preventing the establishment of an antiviral state. Cleaves host TICAM1/TRIF, thereby disrupting TLR3 signaling and preventing the establishment of an antiviral state. Its function is as follows. Induces a specific membrane alteration that serves as a scaffold for the virus replication complex. This membrane alteration gives rise to the so-called ER-derived membranous web that contains the replication complex. NS4B self-interaction contributes to its function in membranous web formation. Promotes host TRIF protein degradation in a CASP8-dependent manner thereby inhibiting host TLR3-mediated interferon signaling. Disrupts the interaction between STING and TBK1 contributing to the inhibition of interferon signaling. Functionally, phosphorylated protein that is indispensable for viral replication and assembly. Both hypo- and hyperphosphorylated states are required for the viral life cycle. The hyperphosphorylated form of NS5A is an inhibitor of viral replication. Involved in RNA-binding and especially in binding to the viral genome. Zinc is essential for RNA-binding. Participates in the viral particle production as a result of its interaction with the mature viral core protein. Its interaction with host VAPB may target the viral replication complex to vesicles. Down-regulates viral IRES translation initiation. Mediates interferon resistance, presumably by interacting with and inhibiting host EIF2AK2/PKR. Prevents BIN1-induced apoptosis. Acts as a transcriptional activator of some host genes important for viral replication when localized in the nucleus. Via the interaction with host PACSIN2, modulates lipid droplet formation in order to promote virion assembly. Modulates TNFRSF21/DR6 signaling pathway for viral propagation. In terms of biological role, RNA-dependent RNA polymerase that performs primer-template recognition and RNA synthesis during viral replication. Initiates RNA transcription/replication at a flavin adenine dinucleotide (FAD), resulting in a 5'- FAD cap on viral RNAs. In this way, recognition of viral 5' RNA by host pattern recognition receptors can be bypassed, thereby evading activation of antiviral pathways. The chain is Genome polyprotein from Hepatitis C virus genotype 6a (isolate EUHK2) (HCV).